The following is a 709-amino-acid chain: Fatty acid oxidation complex subunit alpha (709 aa).

Positions 1–188 are enoyl-CoA hydratase; the sequence is MEKTFNLTRR…KMGLVNDVVP (188 aa). Residues 308–709 form a 3-hydroxyacyl-CoA dehydrogenase region; sequence RKVKKAVILG…EMAAEKTRFF (402 aa).

This sequence in the N-terminal section; belongs to the enoyl-CoA hydratase/isomerase family. The protein in the central section; belongs to the 3-hydroxyacyl-CoA dehydrogenase family. As to quaternary structure, heterotetramer of two alpha chains (FadJ) and two beta chains (FadI).

It localises to the cytoplasm. The catalysed reaction is a (3S)-3-hydroxyacyl-CoA = a (2E)-enoyl-CoA + H2O. It catalyses the reaction a 4-saturated-(3S)-3-hydroxyacyl-CoA = a (3E)-enoyl-CoA + H2O. It carries out the reaction a (3S)-3-hydroxyacyl-CoA + NAD(+) = a 3-oxoacyl-CoA + NADH + H(+). The enzyme catalyses (3S)-3-hydroxybutanoyl-CoA = (3R)-3-hydroxybutanoyl-CoA. It functions in the pathway lipid metabolism; fatty acid beta-oxidation. Functionally, catalyzes the formation of a hydroxyacyl-CoA by addition of water on enoyl-CoA. Also exhibits 3-hydroxyacyl-CoA epimerase and 3-hydroxyacyl-CoA dehydrogenase activities. The polypeptide is Fatty acid oxidation complex subunit alpha (Shewanella sp. (strain MR-7)).